The primary structure comprises 494 residues: ATP synthase subunit beta (494 aa).

Residue 177 to 184 (GGAGVGKT) coordinates ATP.

Belongs to the ATPase alpha/beta chains family. In terms of assembly, F-type ATPases have 2 components, CF(1) - the catalytic core - and CF(0) - the membrane proton channel. CF(1) has five subunits: alpha(3), beta(3), gamma(1), delta(1), epsilon(1). CF(0) has three main subunits: a(1), b(2) and c(9-12). The alpha and beta chains form an alternating ring which encloses part of the gamma chain. CF(1) is attached to CF(0) by a central stalk formed by the gamma and epsilon chains, while a peripheral stalk is formed by the delta and b chains.

The protein localises to the cell membrane. It catalyses the reaction ATP + H2O + 4 H(+)(in) = ADP + phosphate + 5 H(+)(out). Functionally, produces ATP from ADP in the presence of a proton gradient across the membrane. The catalytic sites are hosted primarily by the beta subunits. This chain is ATP synthase subunit beta, found in Bifidobacterium adolescentis (strain ATCC 15703 / DSM 20083 / NCTC 11814 / E194a).